The chain runs to 872 residues: Alanine--tRNA ligase (872 aa).

Zn(2+) contacts are provided by His567, His571, Cys669, and His673.

Belongs to the class-II aminoacyl-tRNA synthetase family. It depends on Zn(2+) as a cofactor.

The protein localises to the cytoplasm. The catalysed reaction is tRNA(Ala) + L-alanine + ATP = L-alanyl-tRNA(Ala) + AMP + diphosphate. Functionally, catalyzes the attachment of alanine to tRNA(Ala) in a two-step reaction: alanine is first activated by ATP to form Ala-AMP and then transferred to the acceptor end of tRNA(Ala). Also edits incorrectly charged Ser-tRNA(Ala) and Gly-tRNA(Ala) via its editing domain. The protein is Alanine--tRNA ligase of Streptococcus pneumoniae serotype 2 (strain D39 / NCTC 7466).